The primary structure comprises 150 residues: UPF0756 membrane protein ABSDF1616 (150 aa).

Transmembrane regions (helical) follow at residues M1–L21, F45–V65, F83–G103, and V115–V135.

The protein belongs to the UPF0756 family.

It is found in the cell membrane. The sequence is that of UPF0756 membrane protein ABSDF1616 from Acinetobacter baumannii (strain SDF).